Here is a 199-residue protein sequence, read N- to C-terminus: Neurotrophic factor BDNF precursor form (199 aa).

The interval 1–23 (GQGSLAYPGLRTQGNLETLSGPN) is disordered. Positions 1–100 (GQGSLAYPGL…AANMSMRVRR (100 aa)) are excised as a propeptide. Residues 12-23 (TQGNLETLSGPN) show a composition bias toward polar residues. Asparagine 93 is a glycosylation site (N-linked (GlcNAc...) asparagine). Cysteine 113 and cysteine 180 are oxidised to a cystine.

Belongs to the NGF-beta family.

Its subcellular location is the secreted. In terms of biological role, promotes the survival of neuronal populations that are all located either in the central nervous system or directly connected to it. In Eunectes notaeus (Yellow anaconda), this protein is Neurotrophic factor BDNF precursor form (BDNF).